The primary structure comprises 141 residues: Large ribosomal subunit protein uL11 (141 aa).

This sequence belongs to the universal ribosomal protein uL11 family. In terms of assembly, part of the ribosomal stalk of the 50S ribosomal subunit. Interacts with L10 and the large rRNA to form the base of the stalk. L10 forms an elongated spine to which L12 dimers bind in a sequential fashion forming a multimeric L10(L12)X complex. In terms of processing, one or more lysine residues are methylated.

Its function is as follows. Forms part of the ribosomal stalk which helps the ribosome interact with GTP-bound translation factors. This is Large ribosomal subunit protein uL11 from Maridesulfovibrio salexigens (strain ATCC 14822 / DSM 2638 / NCIMB 8403 / VKM B-1763) (Desulfovibrio salexigens).